A 336-amino-acid polypeptide reads, in one-letter code: Dihydroorotate dehydrogenase (quinone) (336 aa).

FMN contacts are provided by residues 62–66 (AGLDK) and threonine 86. Lysine 66 contributes to the substrate binding site. 111–115 (NRMGF) serves as a coordination point for substrate. Positions 139 and 172 each coordinate FMN. Asparagine 172 contributes to the substrate binding site. Catalysis depends on serine 175, which acts as the Nucleophile. Asparagine 177 lines the substrate pocket. The FMN site is built by lysine 217 and threonine 245. 246-247 (NT) is a substrate binding site. FMN contacts are provided by residues glycine 268, glycine 297, and 318–319 (YS).

Belongs to the dihydroorotate dehydrogenase family. Type 2 subfamily. In terms of assembly, monomer. FMN is required as a cofactor.

The protein resides in the cell membrane. The catalysed reaction is (S)-dihydroorotate + a quinone = orotate + a quinol. Its pathway is pyrimidine metabolism; UMP biosynthesis via de novo pathway; orotate from (S)-dihydroorotate (quinone route): step 1/1. In terms of biological role, catalyzes the conversion of dihydroorotate to orotate with quinone as electron acceptor. This Klebsiella pneumoniae subsp. pneumoniae (strain ATCC 700721 / MGH 78578) protein is Dihydroorotate dehydrogenase (quinone).